The sequence spans 430 residues: Sesquiterpene synthase Agr5 (430 aa).

An N-terminal signal peptide occupies residues 1 to 25 (MASSLLEPSLAAIALVILLASVSLS). Residue Asn113 is glycosylated (N-linked (GlcNAc...) asparagine). Positions 176, 311, 315, and 319 each coordinate Mg(2+). The short motif at 176-180 (DEYTD) is the DDXXD motif element. Residues Arg401 and Tyr402 each coordinate (2E,6E)-farnesyl diphosphate.

It belongs to the terpene synthase family. Mg(2+) is required as a cofactor.

The catalysed reaction is (2E,6E)-farnesyl diphosphate = viridiflorene + diphosphate. Terpene cyclase that catalyzes the cyclization of farnesyl diphosphate (FPP) to viridiflorene and viridiflorol. In Cyclocybe aegerita (Black poplar mushroom), this protein is Sesquiterpene synthase Agr5.